Reading from the N-terminus, the 65-residue chain is MPAASLESLLPPPPGKLPSPPLRPHGKFQRRRIARMPLPLQPLHTPPLFGLQYRAAQRNPSDRYL.

The interval 1–30 (MPAASLESLLPPPPGKLPSPPLRPHGKFQR) is disordered. Residues 10–23 (LPPPPGKLPSPPLR) show a composition bias toward pro residues.

This is an uncharacterized protein from Homo sapiens (Human).